The following is a 367-amino-acid chain: Glutamate 5-kinase (367 aa).

Lysine 10 provides a ligand contact to ATP. Serine 50, aspartate 137, and asparagine 149 together coordinate substrate. Residues 169–170 (TD) and 211–217 (TGGMSTK) contribute to the ATP site. The 79-residue stretch at 275-353 (AGEITVDDGA…QQIAEILGYE (79 aa)) folds into the PUA domain.

This sequence belongs to the glutamate 5-kinase family.

The protein localises to the cytoplasm. The enzyme catalyses L-glutamate + ATP = L-glutamyl 5-phosphate + ADP. It functions in the pathway amino-acid biosynthesis; L-proline biosynthesis; L-glutamate 5-semialdehyde from L-glutamate: step 1/2. Its function is as follows. Catalyzes the transfer of a phosphate group to glutamate to form L-glutamate 5-phosphate. This Pectobacterium atrosepticum (strain SCRI 1043 / ATCC BAA-672) (Erwinia carotovora subsp. atroseptica) protein is Glutamate 5-kinase.